We begin with the raw amino-acid sequence, 1769 residues long: Gamma-tubulin complex component 6 (1769 aa).

Disordered regions lie at residues 809–842 (EAQQPQEPPSVFPSTGSQVTSTGPEHAGEGHSCD), 859–881 (STPSVPKSATEGADDSGAGPFST), and 1284–1360 (TVCS…AEAR). A compositionally biased stretch (polar residues) spans 820–831 (FPSTGSQVTSTG). Over residues 1314-1326 (PEEKGPGKSRDAE) the composition is skewed to basic and acidic residues. The span at 1332-1343 (LPSSSQEDTAVP) shows a compositional bias: polar residues.

The protein belongs to the TUBGCP family. As to quaternary structure, component of the gamma-tubulin ring complex (gTuRC) consisting of TUBGCP2, TUBGCP3, TUBGCP4, TUBGCP5 and TUBGCP6 and gamma-tubulin TUBG1 or TUBG2. TUBGCP2, TUBGCP3, TUBGCP4, TUBGCP5 and TUBGCP6 assemble in a 5:5:2:1:1 stoichiometry; each is associated with a gamma-tubulin, thereby arranging 14 gamma-tubulins in a helical manner. Gamma-tubulin at the first position is blocked by TUBGCP3 at the last position, allowing 13 protafilaments to grow into a microtubule. The gTuRC (via TUBGCP3 and TUBGCP6) interacts with ACTB and MZT1; the interactions form a luminal bridge that stabilizes the initial structure during complex assembly. The gTuRC (via TUBGCP2) interacts with MZT2A/MZT2B and CDK5RAP2 (via CM1 motif); the interactions play a role in gTuRC activation.

The protein localises to the cytoplasm. It is found in the cytoskeleton. The protein resides in the microtubule organizing center. Its subcellular location is the centrosome. In terms of biological role, component of the gamma-tubulin ring complex (gTuRC) which mediates microtubule nucleation. The gTuRC regulates the minus-end nucleation of alpha-beta tubulin heterodimers that grow into microtubule protafilaments, a critical step in centrosome duplication and spindle formation. The chain is Gamma-tubulin complex component 6 (Tubgcp6) from Mus musculus (Mouse).